Reading from the N-terminus, the 332-residue chain is tRNA-dihydrouridine(20/20a) synthase (332 aa).

Residues 19–21 and glutamine 71 each bind FMN; that span reads PML. The active-site Proton donor is the cysteine 101. Residues lysine 140, histidine 173, 213–215, and 235–236 each bind FMN; these read NGG and GR.

The protein belongs to the Dus family. DusA subfamily. It depends on FMN as a cofactor.

The enzyme catalyses 5,6-dihydrouridine(20) in tRNA + NADP(+) = uridine(20) in tRNA + NADPH + H(+). The catalysed reaction is 5,6-dihydrouridine(20) in tRNA + NAD(+) = uridine(20) in tRNA + NADH + H(+). It carries out the reaction 5,6-dihydrouridine(20a) in tRNA + NADP(+) = uridine(20a) in tRNA + NADPH + H(+). It catalyses the reaction 5,6-dihydrouridine(20a) in tRNA + NAD(+) = uridine(20a) in tRNA + NADH + H(+). Functionally, catalyzes the synthesis of 5,6-dihydrouridine (D), a modified base found in the D-loop of most tRNAs, via the reduction of the C5-C6 double bond in target uridines. Specifically modifies U20 and U20a in tRNAs. The protein is tRNA-dihydrouridine(20/20a) synthase of Salmonella typhimurium (strain LT2 / SGSC1412 / ATCC 700720).